Here is a 179-residue protein sequence, read N- to C-terminus: MPRVVCWHTLKSLNGYKNLSSGAETREGLRSSSPVDLPLRPRKQATAAGQRKLLSLQLLLCACTSVTDLTYWGPAGHGATAPHRSLLAIHLHLVPASSAAMKATGPHNAQTQVNPQGHAPSAEDPTGTWTVSGPCKDHPHPFLSQSNPPTRISSALPLKTDSALEQTPQQLPSLHLSQG.

Lys-43 carries the post-translational modification N6-acetyllysine. Residues 100 to 179 (AMKATGPHNA…QLPSLHLSQG (80 aa)) form a disordered region. Polar residues-rich tracts occupy residues 143–153 (LSQSNPPTRIS) and 163–179 (ALEQTPQQLPSLHLSQG).

Component of the SSP (stage selector protein) complex, which appears to be a heteromer of TFCP2 and 2 copies of NFE4. Interacts with HDAC1 and PCAF. Isoform 2 interacts with TFCP2. In terms of processing, acetylation at Lys-43 prolongs the protein half-life by preventing ubiquitin-mediated degradation and reduces the interaction between NF-E4 and HDAC1, potentially maximizing the activating ability of the factor at the gamma-promoter. Post-translationally, ubiquitinated; leading to its degradation by the proteasome. Acetylation at Lys-43 prevents ubiquitination. Specifically expressed in fetal liver, cord blood and bone marrow. Also expressed in the K562 and HEL cell lines, which constitutively express the fetal globin genes.

Its subcellular location is the nucleus. Functions as part of the SSP (stage selector protein) complex, a complex that contributes to the preferential expression of the gamma-gene in fetal erythroid cells by facilitating the interaction of the gamma-globin genes with enhancer elements contained in the locus control region (LCR). The complex binds to the stage selector element (SSE) in the proximal gamma-globin promoter. In contrast, isoform 2 acts as a repressor of gamma-globin gene expression by preventing NFE2 and RNA polymerase II recruitment to the promoter. The sequence is that of Transcription factor NF-E4 (NFE4) from Homo sapiens (Human).